The chain runs to 358 residues: Aerobic magnesium-protoporphyrin IX monomethyl ester [oxidative] cyclase (358 aa).

Belongs to the AcsF family. Fe cation serves as cofactor.

The catalysed reaction is Mg-protoporphyrin IX 13-monomethyl ester + 3 NADPH + 3 O2 + 2 H(+) = 3,8-divinyl protochlorophyllide a + 3 NADP(+) + 5 H2O. Its pathway is porphyrin-containing compound metabolism; chlorophyll biosynthesis. In terms of biological role, catalyzes the formation of the isocyclic ring in chlorophyll biosynthesis in aerobic conditions. Mediates the cyclase reaction, which results in the formation of divinylprotochlorophyllide (Pchlide) characteristic of all chlorophylls from magnesium-protoporphyrin IX 13-monomethyl ester (MgPMME). The chain is Aerobic magnesium-protoporphyrin IX monomethyl ester [oxidative] cyclase from Rubrivivax gelatinosus (Rhodocyclus gelatinosus).